Here is a 577-residue protein sequence, read N- to C-terminus: Putative pseudouridine synthase B0024.11 (577 aa).

Residue aspartate 188 is the Nucleophile of the active site. One can recognise a TRUD domain in the interval 265 to 472; it reads GFINYFGTQR…GESSRCLFVE (208 aa). Basic and acidic residues predominate over residues 538-565; it reads KAMRDASFKTRGDDEKTEENVLEEKGSD. A disordered region spans residues 538–577; it reads KAMRDASFKTRGDDEKTEENVLEEKGSDDANELNLVSEDQ.

Belongs to the pseudouridine synthase TruD family.

The catalysed reaction is a uridine in tRNA = a pseudouridine in tRNA. This chain is Putative pseudouridine synthase B0024.11, found in Caenorhabditis elegans.